A 470-amino-acid chain; its full sequence is MNISETLNSANTQCNIDSMDNRLHTLFPKVTSVRNAAQQTMPDEKNLKDSANIIKSFFRKTIAAQSYSRMFSQGSNFKSLNIAIDAPSDAKASFKAIEHLDRLSKHYISEIREKLHPLSAEELNLLSLIINSDLIFRHQSNSDLSDKILNIKSFNKIQSEGICTKRNTYADDIKKIANHDFVFFGVEISNHQKKHPLNTKHHTVDFGANAYIIDHDSPYGYMTLTDHFDNAIPPVFYHEHQSFLDKFSEVNKEVSRYVHGSKGIIDVPIFNTKDMKLGLGLYLIDFIRKSEDQSFKEFCYGKNLAPVDLDRIINFVFQPEYHIPRMVSTENFKKVKIREISLEEAVTASNYEEINKQVTNKKIALQALFLSITNQKEDVALYILSNFEITRQDVISIKHELYDIEYLLSAHNSSCKVLEYFINKGLVDVNTKFKKTNSGDCMLDNAIKYENAEMIKLLLKYGATSDNKYI.

Positions 138, 139, 140, 144, 157, 167, 183, 201, 206, 226, and 320 each coordinate NAD(+). The active site involves Glu-320. ANK repeat units follow at residues 363 to 392 (IALQ…ITRQ), 399 to 431 (HELY…DVNT), and 438 to 467 (SGDC…TSDN).

It belongs to the OspC family. In terms of assembly, interacts with host calmodulin (CALM1, CALM2 and/or CALM3); specifically interacts with the apo form of calmodulin, preventing calcium-binding.

The protein localises to the secreted. It localises to the host nucleus. The enzyme catalyses L-arginyl-[protein] + NAD(+) = ADP-riboxanated L-argininyl-[protein] + nicotinamide + NH4(+) + H(+). ADP-riboxanase effector that mediates arginine ADP-riboxanation of host caspases. ADP-riboxanation of host apoptotic caspases (CASP3, CASP8 and CASP9) prevents their activation, thereby inhibiting host cell extrinsic and intrinsic apoptosis. Does not catalyze ADP-riboxanation of host CASP4/CASP11. Independently of its ADP-riboxanase activity, acts as an inhibitor of calcium signaling by inhibiting host calmodulin, preventing activation of the JAK-STAT signaling pathway in response to interferon-beta. Mechanistically, acts by binding to the apo form of calmodulin, preventing calcium-binding and ability to activate host CaMK2 (CAMKII), which is required to stimulate the JAK-STAT signaling pathway in response to interferon-beta. The polypeptide is Arginine ADP-riboxanase OspC1 (Shigella flexneri).